Consider the following 328-residue polypeptide: GMP reductase (328 aa).

C176 acts as the Thioimidate intermediate in catalysis. Position 205-228 (I205–V228) interacts with NADP(+).

This sequence belongs to the IMPDH/GMPR family. GuaC type 2 subfamily.

It catalyses the reaction IMP + NH4(+) + NADP(+) = GMP + NADPH + 2 H(+). In terms of biological role, catalyzes the irreversible NADPH-dependent deamination of GMP to IMP. It functions in the conversion of nucleobase, nucleoside and nucleotide derivatives of G to A nucleotides, and in maintaining the intracellular balance of A and G nucleotides. The sequence is that of GMP reductase from Streptococcus pneumoniae (strain Hungary19A-6).